Reading from the N-terminus, the 406-residue chain is ATP phosphoribosyltransferase regulatory subunit (406 aa).

It belongs to the class-II aminoacyl-tRNA synthetase family. HisZ subfamily. In terms of assembly, heteromultimer composed of HisG and HisZ subunits.

The protein localises to the cytoplasm. It functions in the pathway amino-acid biosynthesis; L-histidine biosynthesis; L-histidine from 5-phospho-alpha-D-ribose 1-diphosphate: step 1/9. Its function is as follows. Required for the first step of histidine biosynthesis. May allow the feedback regulation of ATP phosphoribosyltransferase activity by histidine. This Methylococcus capsulatus (strain ATCC 33009 / NCIMB 11132 / Bath) protein is ATP phosphoribosyltransferase regulatory subunit.